The primary structure comprises 308 residues: Growth/differentiation factor 15 (308 aa).

Positions 1–29 (MPGQELKTLNGSQMLLVLLVLLWPPHGGA) are cleaved as a signal peptide. The propeptide occupies 30–192 (VSLAEASRAS…HLRPRASRGR (163 aa)). A glycan (N-linked (GlcNAc...) asparagine) is linked at N70. Positions 152–179 (APALHLRLSPPPSQSDQLLVKSSSSRPQ) are disordered. Polar residues predominate over residues 165-178 (QSDQLLVKSSSSRP). Cystine bridges form between C203/C210, C211/C274, C240/C305, and C244/C307.

It belongs to the TGF-beta family. In terms of assembly, homodimer; disulfide-linked. Interacts with GFRAL and RET; ligand of GFRAL, which mediates GDF15 internalization and cellular signaling through interaction with RET via the formation of a 2:2:2 ternary complex composed of GDF15, GFRAL and RET. In terms of tissue distribution, detected in plasma (at protein level).

The protein localises to the secreted. Hormone produced in response to various stresses to confer information about those stresses to the brain, and trigger an aversive response, characterized by nausea and/or loss of appetite. The aversive response is both required to reduce continuing exposure to those stresses at the time of exposure and to promote avoidance behavior in the future. Acts by binding to its receptor, GFRAL, activating GFRAL-expressing neurons localized in the area postrema and nucleus tractus solitarius of the brainstem. It then triggers the activation of neurons localized within the parabrachial nucleus and central amygdala, which constitutes part of the 'emergency circuit' that shapes responses to stressful conditions. The GDF15-GFRAL signal induces expression of genes involved in metabolism, such as lipid metabolism in adipose tissues. Required for avoidance behavior in response to food allergens: induced downstream of mast cell activation to promote aversion and minimize harmful effects of exposure to noxious substances. In addition to suppress appetite, also promotes weight loss by enhancing energy expenditure in muscle: acts by increasing calcium futile cycling in muscle. Contributes to the effect of metformin, an anti-diabetic drug, on appetite reduction and weight loss: produced in the kidney in response to metformin treatment, thereby activating the GDF15-GFRAL response, leading to reduced appetite and weight. Produced in response to anticancer drugs, such as camptothecin or cisplatin, promoting nausea and contributing to malnutrition. Overproduced in many cancers, promoting anorexia in cancer (cachexia). Responsible for the risk of nausea during pregnancy: high levels of GDF15 during pregnancy, mostly originating from embryos, are associated with increased nausea. Maternal sensitivity to nausea is probably determined by pre-pregnancy exposure to GDF15, females with naturally high level of GDF15 being less susceptible to nausea than females with low levels of GDF15 before pregnancy. Promotes metabolic adaptation in response to systemic inflammation caused by bacterial and viral infections in order to promote tissue tolerance and prevent tissue damage. Inhibits growth hormone signaling on hepatocytes. In Macaca fascicularis (Crab-eating macaque), this protein is Growth/differentiation factor 15.